Reading from the N-terminus, the 329-residue chain is Beta-ketoacyl-[acyl-carrier-protein] synthase III (329 aa).

Catalysis depends on residues Cys-113 and His-255. The tract at residues 256-260 is ACP-binding; the sequence is QANQR. Asn-285 is a catalytic residue.

This sequence belongs to the thiolase-like superfamily. FabH family. Homodimer.

The protein resides in the cytoplasm. The catalysed reaction is malonyl-[ACP] + acetyl-CoA + H(+) = 3-oxobutanoyl-[ACP] + CO2 + CoA. The protein operates within lipid metabolism; fatty acid biosynthesis. In terms of biological role, catalyzes the condensation reaction of fatty acid synthesis by the addition to an acyl acceptor of two carbons from malonyl-ACP. Catalyzes the first condensation reaction which initiates fatty acid synthesis and may therefore play a role in governing the total rate of fatty acid production. Possesses both acetoacetyl-ACP synthase and acetyl transacylase activities. Its substrate specificity determines the biosynthesis of branched-chain and/or straight-chain of fatty acids. This chain is Beta-ketoacyl-[acyl-carrier-protein] synthase III, found in Chlorobaculum tepidum (strain ATCC 49652 / DSM 12025 / NBRC 103806 / TLS) (Chlorobium tepidum).